The chain runs to 366 residues: UPF0324 membrane protein RSc1111 (366 aa).

Transmembrane regions (helical) follow at residues 21–43, 103–125, 137–159, 169–191, 198–220, 240–262, 283–305, and 343–365; these read LAGA…TAWA, LGAS…GAWV, AVLV…APAV, AIAS…YALA, VAPA…VIAA, VLAL…LVLE, WFAA…ATWH, and AGVL…RWLA.

It belongs to the UPF0324 family.

It is found in the cell membrane. The protein is UPF0324 membrane protein RSc1111 of Ralstonia nicotianae (strain ATCC BAA-1114 / GMI1000) (Ralstonia solanacearum).